Reading from the N-terminus, the 1956-residue chain is Probable cation-transporting ATPase 1 (1956 aa).

Residues 1 to 35 lie on the Cytoplasmic side of the membrane; the sequence is MHLMCTGLRNEKLINDRKILYGECNLNIKSDSFII. Residues 36–58 form a helical membrane-spanning segment; the sequence is LLFKEIMNPFFIFQIFAMIVWSL. Residues 59 to 61 are Extracellular-facing; sequence DNY. The chain crosses the membrane as a helical span at residues 62–80; the sequence is IEYTISILFITSISIILEL. Residues 81 to 407 are Cytoplasmic-facing; that stretch reads KNTIKNQKKI…KKELNLINDS (327 aa). A helical membrane pass occupies residues 408–427; that stretch reads YKFLIILIIYALFSVFILLY. Topologically, residues 428-440 are extracellular; it reads ITLSNNEYTNHII. The chain crosses the membrane as a helical span at residues 441–462; the sequence is IKCLDIITDAIPPALPTTLTVG. Residues 463 to 1818 are Cytoplasmic-facing; the sequence is ISIAISRLKK…SLVNSFQLFK (1356 aa). The active-site 4-aspartylphosphate intermediate is D496. The interval 901–938 is disordered; that stretch reads YGNNNDDNNDDDNNNDDDNNDDNNNDDNNNDDNNDDNN. The span at 907-935 shows a compositional bias: acidic residues; the sequence is DNNDDDNNNDDDNNDDNNNDDNNNDDNND. Mg(2+) is bound by residues D1760 and D1764. Residues 1819-1837 form a helical membrane-spanning segment; sequence FISLYSIMQCSQVLILYSI. Residues 1838–1845 are Extracellular-facing; the sequence is SNKLTDNQ. Residues 1846-1863 traverse the membrane as a helical segment; it reads YIFIDIVTILPLSIFMCW. Residues 1864-1881 are Cytoplasmic-facing; sequence TSASEKLSKNIPIGKLFS. Residues 1882 to 1905 form a helical membrane-spanning segment; it reads FPILISIYGQIIIQLFFVMISLVV. Residues 1906–1928 are Extracellular-facing; sequence LMNLSFYKYDKNKVMKEKSDDTY. The helical transmembrane segment at 1929 to 1952 threads the bilayer; that stretch reads LYKAQKYTLIYSLLFSKFVYVYIF. Topologically, residues 1953 to 1956 are cytoplasmic; sequence KYKE.

It belongs to the cation transport ATPase (P-type) (TC 3.A.3) family. Type V subfamily.

Its subcellular location is the membrane. The catalysed reaction is ATP + H2O = ADP + phosphate + H(+). In Plasmodium falciparum, this protein is Probable cation-transporting ATPase 1.